Here is a 257-residue protein sequence, read N- to C-terminus: uncharacterized protein (257 aa).

The chain crosses the membrane as a helical span at residues 7-27; the sequence is IGILEIVVILSILITSVSLAY.

The protein resides in the membrane. This is an uncharacterized protein from Methanocaldococcus jannaschii (strain ATCC 43067 / DSM 2661 / JAL-1 / JCM 10045 / NBRC 100440) (Methanococcus jannaschii).